A 1063-amino-acid chain; its full sequence is JmjC domain-containing histone demethylation protein 1 (1063 aa).

The region spanning 86–266 (LYNVLSLEYS…TQLRVYQVEN (181 aa)) is the JmjC domain. Thr160 lines the substrate pocket. Fe cation-binding residues include His163 and Asp165. Lys180 contacts substrate. Residue His234 coordinates Fe cation. Residues 379–389 (GLEEEAEDEDV) are compositionally biased toward acidic residues. 3 disordered regions span residues 379 to 400 (GLEE…AEER), 554 to 750 (ESDE…NPYN), and 776 to 1040 (VELH…KRAK). A compositionally biased stretch (basic and acidic residues) spans 390–400 (KPETKKEAEER). Acidic residues-rich tracts occupy residues 594–605 (PEYDEDMEEYDP) and 613–631 (ELEE…EEEY). The segment covering 636-646 (TRRSSTRGSAS) has biased composition (low complexity). Basic and acidic residues-rich tracts occupy residues 647–665 (TKEE…PKKE), 674–712 (EKSS…ELRA), 776–806 (VELH…HEDS), 813–835 (PYDR…DSHR), and 892–902 (EPRRSNDRRTS). A compositionally biased stretch (low complexity) spans 926–937 (AEAASASSSRHS). Composition is skewed to polar residues over residues 950 to 963 (LNSS…TPMY) and 973 to 982 (WLPNTSNVTR). Residues 1005 to 1016 (PPFPRSITPPPV) show a composition bias toward pro residues. Positions 1020 to 1030 (ELKSQSNGRKS) are enriched in polar residues. Over residues 1031–1040 (NYSEDGKRAK) the composition is skewed to basic and acidic residues.

This sequence belongs to the JHDM1 histone demethylase family. The cofactor is Fe(2+).

The protein resides in the nucleus. The catalysed reaction is N(6),N(6)-dimethyl-L-lysyl(36)-[histone H3] + 2 2-oxoglutarate + 2 O2 = L-lysyl(36)-[histone H3] + 2 formaldehyde + 2 succinate + 2 CO2. Functionally, histone demethylase that specifically demethylates 'Lys-36' of histone H3, thereby playing a central role in histone code. The polypeptide is JmjC domain-containing histone demethylation protein 1 (jhdm-1) (Caenorhabditis briggsae).